The sequence spans 294 residues: 33 kDa chaperonin (294 aa).

Intrachain disulfides connect C239–C241 and C272–C275.

It belongs to the HSP33 family. In terms of processing, under oxidizing conditions two disulfide bonds are formed involving the reactive cysteines. Under reducing conditions zinc is bound to the reactive cysteines and the protein is inactive.

The protein localises to the cytoplasm. Functionally, redox regulated molecular chaperone. Protects both thermally unfolding and oxidatively damaged proteins from irreversible aggregation. Plays an important role in the bacterial defense system toward oxidative stress. The chain is 33 kDa chaperonin from Listeria monocytogenes serotype 4a (strain HCC23).